A 230-amino-acid polypeptide reads, in one-letter code: Ribonuclease 3 (230 aa).

The RNase III domain maps to 10-133 (DPRLQSRIGY…IIGAIYVDSN (124 aa)). E46 contacts Mg(2+). D50 is a catalytic residue. Mg(2+)-binding residues include D119 and E122. E122 is an active-site residue. The DRBM domain maps to 161–230 (DPKSRLQEYL…AAEILKLLEQ (70 aa)).

The protein belongs to the ribonuclease III family. Homodimer. The cofactor is Mg(2+).

Its subcellular location is the cytoplasm. It catalyses the reaction Endonucleolytic cleavage to 5'-phosphomonoester.. Its function is as follows. Digests double-stranded RNA. Involved in the processing of primary rRNA transcript to yield the immediate precursors to the large and small rRNAs (23S and 16S). Processes some mRNAs, and tRNAs when they are encoded in the rRNA operon. Processes pre-crRNA and tracrRNA of type II CRISPR loci if present in the organism. The chain is Ribonuclease 3 from Acinetobacter baylyi (strain ATCC 33305 / BD413 / ADP1).